Here is a 339-residue protein sequence, read N- to C-terminus: DNA-directed RNA polymerase subunit alpha (339 aa).

The tract at residues 1-233 (MVREEVAGST…DLFLPFLHAE (233 aa)) is alpha N-terminal domain (alpha-NTD). The interval 264-339 (KKGIPLNCIF…IDLLKNKLSF (76 aa)) is alpha C-terminal domain (alpha-CTD).

It belongs to the RNA polymerase alpha chain family. As to quaternary structure, in plastids the minimal PEP RNA polymerase catalytic core is composed of four subunits: alpha, beta, beta', and beta''. When a (nuclear-encoded) sigma factor is associated with the core the holoenzyme is formed, which can initiate transcription.

The protein resides in the plastid. The protein localises to the chloroplast. It catalyses the reaction RNA(n) + a ribonucleoside 5'-triphosphate = RNA(n+1) + diphosphate. Its function is as follows. DNA-dependent RNA polymerase catalyzes the transcription of DNA into RNA using the four ribonucleoside triphosphates as substrates. In Elymus hystrix (Eastern bottlebrush grass), this protein is DNA-directed RNA polymerase subunit alpha.